We begin with the raw amino-acid sequence, 512 residues long: Kelch repeat protein C2 (512 aa).

Positions 2–67 (ESVIFSINGE…MRWKKINITI (66 aa)) constitute a BTB domain. Kelch repeat units follow at residues 216–261 (IKHN…LHNC), 262–307 (LYII…VNDG), 309–354 (LYVI…FVND), 356–403 (IYVM…EYDG), 405–449 (IYVI…SCGD), and 452–498 (LIIA…THKS).

The protein belongs to the poxviruses Kelch family.

In Vaccinia virus (strain Copenhagen) (VACV), this protein is Kelch repeat protein C2.